The following is a 117-amino-acid chain: Small ribosomal subunit protein bS6m (117 aa).

The protein belongs to the bacterial ribosomal protein bS6 family. Component of the mitochondrial small ribosomal subunit (mt-SSU). Mature N.crassa 74S mitochondrial ribosomes consist of a small (37S) and a large (54S) subunit. The 37S small subunit contains a 16S ribosomal RNA (16S mt-rRNA) and 32 different proteins. The 54S large subunit contains a 23S rRNA (23S mt-rRNA) and 42 different proteins.

It is found in the mitochondrion. Component of the mitochondrial ribosome (mitoribosome), a dedicated translation machinery responsible for the synthesis of mitochondrial genome-encoded proteins, including at least some of the essential transmembrane subunits of the mitochondrial respiratory chain. The mitoribosomes are attached to the mitochondrial inner membrane and translation products are cotranslationally integrated into the membrane. The sequence is that of Small ribosomal subunit protein bS6m (mrp17) from Neurospora crassa (strain ATCC 24698 / 74-OR23-1A / CBS 708.71 / DSM 1257 / FGSC 987).